An 805-amino-acid polypeptide reads, in one-letter code: Ribosome biogenesis protein ERB1 (805 aa).

Residues 1-105 form a disordered region; sequence MVKGRKSQKA…SDFSEDDTKS (105 aa). A compositionally biased stretch (basic and acidic residues) spans 8 to 22; the sequence is QKADKVTKAKKRVAD. Positions 23–75 are enriched in acidic residues; that stretch reads EVDESESEPELQVEGLIDAEAESEDDESFESAEENASAEEDEEDEEDEEDSDA. Residues 264–382 form a required for interaction with NOP7 region; it reads RFVPSKNEAK…LRKVPGYTES (119 aa). The tract at residues 382–418 is required for interaction with YTM1; the sequence is SVRERFERSLDLYLAPRMRKNKLNIDPESLIPELPSP. WD repeat units lie at residues 434–473, 482–522, 590–632, 635–673, 676–715, 719–758, and 775–805; these read GHEG…EVYR, NPED…YDIE, VCKK…TQSP, KSKG…LVKK, PGAR…TPYK, YHDK…DMMK, and GHLG…MWTT.

This sequence belongs to the WD repeat BOP1/ERB1 family. In terms of assembly, component of the NOP7 complex, composed of ERB1, NOP7 and YTM1. The complex is held together by ERB1, which interacts with NOP7 via its N-terminal domain and with YTM1 via a high-affinity interaction between the seven-bladed beta-propeller domains of the 2 proteins. The NOP7 complex associates with the 66S pre-ribosome.

It localises to the nucleus. It is found in the nucleolus. Its subcellular location is the nucleoplasm. In terms of biological role, component of the NOP7 complex, which is required for maturation of the 25S and 5.8S ribosomal RNAs and formation of the 60S ribosome. The protein is Ribosome biogenesis protein ERB1 of Candida glabrata (strain ATCC 2001 / BCRC 20586 / JCM 3761 / NBRC 0622 / NRRL Y-65 / CBS 138) (Yeast).